Reading from the N-terminus, the 263-residue chain is 3-methyl-2-oxobutanoate hydroxymethyltransferase (263 aa).

Mg(2+)-binding residues include Asp-43 and Asp-82. 3-methyl-2-oxobutanoate is bound by residues 43–44 (DS), Asp-82, and Lys-111. Glu-113 contributes to the Mg(2+) binding site. Glu-179 acts as the Proton acceptor in catalysis.

Belongs to the PanB family. In terms of assembly, homodecamer; pentamer of dimers. Mg(2+) is required as a cofactor.

It is found in the cytoplasm. It catalyses the reaction 3-methyl-2-oxobutanoate + (6R)-5,10-methylene-5,6,7,8-tetrahydrofolate + H2O = 2-dehydropantoate + (6S)-5,6,7,8-tetrahydrofolate. Its pathway is cofactor biosynthesis; (R)-pantothenate biosynthesis; (R)-pantoate from 3-methyl-2-oxobutanoate: step 1/2. Catalyzes the reversible reaction in which hydroxymethyl group from 5,10-methylenetetrahydrofolate is transferred onto alpha-ketoisovalerate to form ketopantoate. This is 3-methyl-2-oxobutanoate hydroxymethyltransferase from Neisseria meningitidis serogroup A / serotype 4A (strain DSM 15465 / Z2491).